Consider the following 109-residue polypeptide: Nucleoid-associated protein PM0205 (109 aa).

It belongs to the YbaB/EbfC family. As to quaternary structure, homodimer.

It localises to the cytoplasm. It is found in the nucleoid. In terms of biological role, binds to DNA and alters its conformation. May be involved in regulation of gene expression, nucleoid organization and DNA protection. This is Nucleoid-associated protein PM0205 from Pasteurella multocida (strain Pm70).